The following is a 266-amino-acid chain: ATP synthase subunit a (266 aa).

7 consecutive transmembrane segments (helical) span residues 28 to 48, 90 to 110, 125 to 145, 158 to 178, 187 to 207, 216 to 236, and 239 to 259; these read ISFT…AIFM, LIFT…VPLF, VTVT…VGFT, HGTP…SFIL, LFVA…FIVN, AFLA…MIGI, and LEFL…SLYL.

It belongs to the ATPase A chain family. As to quaternary structure, F-type ATPases have 2 components, CF(1) - the catalytic core - and CF(0) - the membrane proton channel. CF(1) has five subunits: alpha(3), beta(3), gamma(1), delta(1), epsilon(1). CF(0) has three main subunits: a(1), b(2) and c(9-12). The alpha and beta chains form an alternating ring which encloses part of the gamma chain. CF(1) is attached to CF(0) by a central stalk formed by the gamma and epsilon chains, while a peripheral stalk is formed by the delta and b chains.

The protein resides in the cell inner membrane. Its function is as follows. Key component of the proton channel; it plays a direct role in the translocation of protons across the membrane. This chain is ATP synthase subunit a, found in Zymomonas mobilis subsp. mobilis (strain ATCC 31821 / ZM4 / CP4).